The sequence spans 295 residues: tRNA dimethylallyltransferase (295 aa).

9–16 is a binding site for ATP; it reads GATATGKS. Residue 11-16 coordinates substrate; sequence TATGKS. Positions 34 to 37 are interaction with substrate tRNA; it reads DSRQ.

This sequence belongs to the IPP transferase family. In terms of assembly, monomer. It depends on Mg(2+) as a cofactor.

It carries out the reaction adenosine(37) in tRNA + dimethylallyl diphosphate = N(6)-dimethylallyladenosine(37) in tRNA + diphosphate. In terms of biological role, catalyzes the transfer of a dimethylallyl group onto the adenine at position 37 in tRNAs that read codons beginning with uridine, leading to the formation of N6-(dimethylallyl)adenosine (i(6)A). The polypeptide is tRNA dimethylallyltransferase (Nostoc sp. (strain PCC 7120 / SAG 25.82 / UTEX 2576)).